A 197-amino-acid chain; its full sequence is Glycerol-3-phosphate acyltransferase (197 aa).

Transmembrane regions (helical) follow at residues 1–21 (MDFI…GLLI), 50–70 (LGFA…VLAA), 82–102 (IVCL…YLGF), 112–132 (LGVF…VFAA), and 159–179 (GASQ…WIKH).

It belongs to the PlsY family. As to quaternary structure, probably interacts with PlsX.

Its subcellular location is the cell inner membrane. It catalyses the reaction an acyl phosphate + sn-glycerol 3-phosphate = a 1-acyl-sn-glycero-3-phosphate + phosphate. The protein operates within lipid metabolism; phospholipid metabolism. Catalyzes the transfer of an acyl group from acyl-phosphate (acyl-PO(4)) to glycerol-3-phosphate (G3P) to form lysophosphatidic acid (LPA). This enzyme utilizes acyl-phosphate as fatty acyl donor, but not acyl-CoA or acyl-ACP. This is Glycerol-3-phosphate acyltransferase from Desulfotalea psychrophila (strain LSv54 / DSM 12343).